The chain runs to 493 residues: Probable cytosol aminopeptidase (493 aa).

Mn(2+) contacts are provided by Lys260 and Asp265. Lys272 is a catalytic residue. Positions 284, 343, and 345 each coordinate Mn(2+). The active site involves Arg347.

It belongs to the peptidase M17 family. Mn(2+) is required as a cofactor.

The protein resides in the cytoplasm. It catalyses the reaction Release of an N-terminal amino acid, Xaa-|-Yaa-, in which Xaa is preferably Leu, but may be other amino acids including Pro although not Arg or Lys, and Yaa may be Pro. Amino acid amides and methyl esters are also readily hydrolyzed, but rates on arylamides are exceedingly low.. It carries out the reaction Release of an N-terminal amino acid, preferentially leucine, but not glutamic or aspartic acids.. Its function is as follows. Presumably involved in the processing and regular turnover of intracellular proteins. Catalyzes the removal of unsubstituted N-terminal amino acids from various peptides. The protein is Probable cytosol aminopeptidase of Nostoc punctiforme (strain ATCC 29133 / PCC 73102).